The chain runs to 597 residues: Gigaxonin (597 aa).

Residues 30-99 (CDAHLVLDGE…IFSGQIRLNE (70 aa)) enclose the BTB domain. The 103-residue stretch at 134–236 (CIGIRDFALH…DSSYLREQML (103 aa)) folds into the BACK domain. Kelch repeat units follow at residues 274-326 (CIVT…SAEG), 327-374 (FLFV…EIDG), 376-421 (LYIL…AMKK), 422-468 (KIYA…GVAM), 470-522 (LYVF…VYGA), and 528-574 (SIYV…AALR).

In terms of assembly, interacts with TBCB. Interacts with CUL3. Part of a complex that contains CUL3, RBX1 and GAN. Interacts (via BTB domain) with UBA1. Interacts (via Kelch domains) with MAP1B (via C-terminus) and MAP1S (via C-terminus). Post-translationally, ubiquitinated by E3 ubiquitin ligase complex formed by CUL3 and RBX1 and probably targeted for proteasome-independent degradation. As to expression, expressed in brain, heart and muscle (at protein level).

It is found in the cytoplasm. The protein localises to the cytoskeleton. Its pathway is protein modification; protein ubiquitination. In terms of biological role, probable cytoskeletal component that directly or indirectly plays an important role in neurofilament architecture. May act as a substrate-specific adapter of an E3 ubiquitin-protein ligase complex which mediates the ubiquitination and subsequent proteasomal degradation of target proteins. Controls degradation of TBCB. Controls degradation of MAP1B and MAP1S, and is critical for neuronal maintenance and survival. The polypeptide is Gigaxonin (Mus musculus (Mouse)).